Consider the following 1294-residue polypeptide: Leucine-rich repeat receptor protein kinase MSP1 (1294 aa).

Positions 1–22 (MVSNSFWLFILLVSFIPISAWA) are cleaved as a signal peptide. LRR repeat units follow at residues 88 to 112 (FQSL…LGNL), 113 to 136 (QNLQ…LYNL), 138 to 160 (MLKE…IAQL), 161 to 184 (QHLT…LGSL), and 186 to 207 (NLEL…TFGN). N-linked (GlcNAc...) asparagine glycosylation is found at Asn-198, Asn-207, and Asn-220. 23 LRR repeats span residues 232 to 256 (LTNL…IGQL), 258 to 280 (NLEL…IGSL), 282 to 304 (QLKL…ISGL), 305 to 328 (SSLT…MGEL), 330 to 352 (NLTQ…LGNC), 353 to 376 (KKLT…FADL), 378 to 400 (AIVS…IQKW), 401 to 422 (KNAR…VLPL), 423 to 446 (QHLL…ICQA), 447 to 469 (NSLH…AFKG), 471 to 493 (TNLT…YLAE), 494 to 517 (LPLV…LWES), 519 to 541 (TLLE…IGKL), 542 to 565 (SVLQ…VGDL), 566 to 589 (RNLT…LFNC), 591 to 613 (KLAT…ISHL), 614 to 637 (TLLD…ICVG), 649 to 673 (LQHH…IKNC), 675 to 697 (MVMV…LGEL), 698 to 721 (TNLT…SGPL), 722 to 745 (VQLQ…IGQI), 746 to 770 (LPKI…LLCN), and 772 to 794 (YLNH…CPDG). Asn-330 and Asn-359 each carry an N-linked (GlcNAc...) asparagine glycan. Residues Asn-458 and Asn-472 are each glycosylated (N-linked (GlcNAc...) asparagine). Asn-567, Asn-570, and Asn-601 each carry an N-linked (GlcNAc...) asparagine glycan. N-linked (GlcNAc...) asparagine glycosylation is found at Asn-687, Asn-699, and Asn-704. N-linked (GlcNAc...) asparagine glycosylation is found at Asn-805, Asn-821, and Asn-832. 2 LRR repeats span residues 822 to 846 (FTQL…LSDL) and 848 to 870 (SLNY…ICNI). The chain crosses the membrane as a helical span at residues 917 to 937 (ITICAFTFVIIIVLVLLAVYL). Residues 1002-1282 (FSKVHIIGDG…KGLKMTHGME (281 aa)) form the Protein kinase domain. ATP is bound by residues 1008–1016 (IGDGGFGTV) and Lys-1030. Asp-1129 functions as the Proton acceptor in the catalytic mechanism.

The protein belongs to the protein kinase superfamily. Ser/Thr protein kinase family. In terms of assembly, interacts with TDL1A. As to expression, expressed in anthers and ovules during meiosis.

The protein localises to the cell membrane. The enzyme catalyses L-seryl-[protein] + ATP = O-phospho-L-seryl-[protein] + ADP + H(+). The catalysed reaction is L-threonyl-[protein] + ATP = O-phospho-L-threonyl-[protein] + ADP + H(+). In terms of biological role, receptor-like kinase that plays important roles in restricting the number of cells entering into male and female sporogenesis. Involved in cell specification during anther development and initiation of anther wall formation. The sequence is that of Leucine-rich repeat receptor protein kinase MSP1 from Oryza sativa subsp. japonica (Rice).